The primary structure comprises 113 residues: Photosystem II reaction center Psb28 protein (113 aa).

This sequence belongs to the Psb28 family. Part of the photosystem II complex.

The protein localises to the cellular thylakoid membrane. The polypeptide is Photosystem II reaction center Psb28 protein (Prochlorococcus marinus (strain NATL1A)).